A 200-amino-acid polypeptide reads, in one-letter code: Transgelin (200 aa).

Serine 2 is modified (N-acetylserine). At serine 11 the chain carries Phosphoserine. Residues 26–136 (PEAIQNIKIW…QTLKSLSRYA (111 aa)) form the Calponin-homology (CH) domain. The tract at residues 144 to 168 (FPVLGPQLSTKKPRPPVKSKPKHLQ) is disordered. The tract at residues 151 to 164 (LSTKKPRPPVKSKP) is interaction with SH3 domain of ABP1. Over residues 154-165 (KKPRPPVKSKPK) the composition is skewed to basic residues.

As to quaternary structure, binds to actin. Interacts with ABP1.

It is found in the cytoplasm. Its subcellular location is the cytoskeleton. It localises to the actin patch. Functionally, has actin-binding and actin-bundling activity. Stabilizes actin filaments against disassembly. The polypeptide is Transgelin (SCP1) (Saccharomyces cerevisiae (strain ATCC 204508 / S288c) (Baker's yeast)).